Reading from the N-terminus, the 64-residue chain is Small ribosomal subunit protein eS17 (64 aa).

It belongs to the eukaryotic ribosomal protein eS17 family.

The sequence is that of Small ribosomal subunit protein eS17 from Methanospirillum hungatei JF-1 (strain ATCC 27890 / DSM 864 / NBRC 100397 / JF-1).